The chain runs to 910 residues: Protein translocase subunit SecA (910 aa).

ATP is bound by residues Gln-87, 105–109, and Asp-508; that span reads GEGKT. Residues 558 to 568 are compositionally biased toward basic and acidic residues; the sequence is RHESRRIDNQL. Disordered stretches follow at residues 558–580 and 873–910; these read RHES…DPGS and AAQQ…GQLS. Zn(2+) contacts are provided by Cys-894, Cys-896, Cys-905, and His-906. Residues 900-910 are compositionally biased toward basic residues; sequence KKYKHCHGQLS.

This sequence belongs to the SecA family. In terms of assembly, monomer and homodimer. Part of the essential Sec protein translocation apparatus which comprises SecA, SecYEG and auxiliary proteins SecDF-YajC and YidC. Zn(2+) serves as cofactor.

It is found in the cell inner membrane. The protein resides in the cytoplasm. It catalyses the reaction ATP + H2O + cellular proteinSide 1 = ADP + phosphate + cellular proteinSide 2.. In terms of biological role, part of the Sec protein translocase complex. Interacts with the SecYEG preprotein conducting channel. Has a central role in coupling the hydrolysis of ATP to the transfer of proteins into and across the cell membrane, serving both as a receptor for the preprotein-SecB complex and as an ATP-driven molecular motor driving the stepwise translocation of polypeptide chains across the membrane. This Stenotrophomonas maltophilia (strain R551-3) protein is Protein translocase subunit SecA.